Reading from the N-terminus, the 258-residue chain is Uroplakin-1a (258 aa).

The Cytoplasmic portion of the chain corresponds to 1–14 (MASAAAATTEKGSP). Residues 15 to 35 (VVVGLLVMGNIIILLSGLALF) form a helical membrane-spanning segment. At 36–59 (AETVWVTADQYRIYPLMGVSGKDD) the chain is on the extracellular side. Residues 60-86 (VFAGAWIAIFCGFSFFVVASFGVGAAL) traverse the membrane as a helical segment. Residues 87 to 91 (CRRRS) are Cytoplasmic-facing. Residues 92-112 (MILTYLILMLIIYIFECASCI) traverse the membrane as a helical segment. Residues 113–230 (TSYTHRDYMV…HIGHAIDSYT (118 aa)) lie on the Extracellular side of the membrane. N-linked (GlcNAc...) asparagine glycosylation occurs at asparagine 170. Residues 231–252 (WGISWFGFAILMWTLPVMLIAM) form a helical membrane-spanning segment. Residues 253-258 (YFYTTL) are Cytoplasmic-facing.

It belongs to the tetraspanin (TM4SF) family. Homodimer; disulfide-linked. Interacts with uroplakin-2 (UPK2). In terms of processing, the N-terminus is blocked. N-glycosylated with high-mannose oligosaccharides. In terms of tissue distribution, bladder epithelium.

It is found in the membrane. Its function is as follows. Component of the asymmetric unit membrane (AUM); a highly specialized biomembrane elaborated by terminally differentiated urothelial cells. May play an important role in normal bladder epithelial physiology, possibly in regulating membrane permeability of superficial umbrella cells or in stabilizing the apical membrane through AUM/cytoskeletal interactions. The chain is Uroplakin-1a (UPK1A) from Bos taurus (Bovine).